The chain runs to 373 residues: ORC1-type DNA replication protein 2 (373 aa).

Residues 63–67 (TGKTS), tyrosine 205, and arginine 217 each bind ATP.

Belongs to the CDC6/cdc18 family.

In terms of biological role, involved in regulation of DNA replication. The protein is ORC1-type DNA replication protein 2 (cdc6-2) of Methanosarcina mazei (strain ATCC BAA-159 / DSM 3647 / Goe1 / Go1 / JCM 11833 / OCM 88) (Methanosarcina frisia).